The sequence spans 282 residues: Pantothenate synthetase (282 aa).

33–40 (MGALHAGH) is an ATP binding site. The Proton donor role is filled by histidine 40. Glutamine 64 contributes to the (R)-pantoate binding site. Glutamine 64 contributes to the beta-alanine binding site. ATP is bound at residue 150–153 (GEKD). Glutamine 156 contacts (R)-pantoate. Residues valine 179 and 187-190 (LSSR) each bind ATP.

It belongs to the pantothenate synthetase family. As to quaternary structure, homodimer.

It is found in the cytoplasm. It carries out the reaction (R)-pantoate + beta-alanine + ATP = (R)-pantothenate + AMP + diphosphate + H(+). The protein operates within cofactor biosynthesis; (R)-pantothenate biosynthesis; (R)-pantothenate from (R)-pantoate and beta-alanine: step 1/1. In terms of biological role, catalyzes the condensation of pantoate with beta-alanine in an ATP-dependent reaction via a pantoyl-adenylate intermediate. This Rhodospirillum rubrum (strain ATCC 11170 / ATH 1.1.1 / DSM 467 / LMG 4362 / NCIMB 8255 / S1) protein is Pantothenate synthetase.